A 247-amino-acid polypeptide reads, in one-letter code: tRNA pseudouridine synthase A (247 aa).

The Nucleophile role is filled by Asp-53. Tyr-112 contributes to the substrate binding site.

Belongs to the tRNA pseudouridine synthase TruA family. Homodimer.

The enzyme catalyses uridine(38/39/40) in tRNA = pseudouridine(38/39/40) in tRNA. Formation of pseudouridine at positions 38, 39 and 40 in the anticodon stem and loop of transfer RNAs. In Anaplasma marginale (strain St. Maries), this protein is tRNA pseudouridine synthase A.